The primary structure comprises 312 residues: Ribonuclease Z (312 aa).

Zn(2+)-binding residues include histidine 63, histidine 65, aspartate 67, histidine 68, histidine 140, aspartate 211, and histidine 269. Residue aspartate 67 is the Proton acceptor of the active site.

It belongs to the RNase Z family. In terms of assembly, homodimer. Requires Zn(2+) as cofactor.

The enzyme catalyses Endonucleolytic cleavage of RNA, removing extra 3' nucleotides from tRNA precursor, generating 3' termini of tRNAs. A 3'-hydroxy group is left at the tRNA terminus and a 5'-phosphoryl group is left at the trailer molecule.. In terms of biological role, zinc phosphodiesterase, which displays some tRNA 3'-processing endonuclease activity. Probably involved in tRNA maturation, by removing a 3'-trailer from precursor tRNA. This is Ribonuclease Z from Anoxybacillus flavithermus (strain DSM 21510 / WK1).